The following is a 657-amino-acid chain: tRNA uridine 5-carboxymethylaminomethyl modification enzyme MnmG (657 aa).

13–18 provides a ligand contact to FAD; sequence GGGHAG. Residue 281–295 participates in NAD(+) binding; sequence GPRYCPSVEDKINRF.

This sequence belongs to the MnmG family. As to quaternary structure, homodimer. Heterotetramer of two MnmE and two MnmG subunits. The cofactor is FAD.

The protein resides in the cytoplasm. In terms of biological role, NAD-binding protein involved in the addition of a carboxymethylaminomethyl (cmnm) group at the wobble position (U34) of certain tRNAs, forming tRNA-cmnm(5)s(2)U34. This is tRNA uridine 5-carboxymethylaminomethyl modification enzyme MnmG from Acidovorax ebreus (strain TPSY) (Diaphorobacter sp. (strain TPSY)).